A 104-amino-acid chain; its full sequence is Meiotically up-regulated gene 150 protein (104 aa).

A run of 3 helical transmembrane segments spans residues 30-50 (FFLK…KAWI), 54-74 (TISL…IPYF), and 84-104 (LLWF…SLEI).

The protein resides in the endoplasmic reticulum membrane. Has a role in meiosis. This is Meiotically up-regulated gene 150 protein (mug150) from Schizosaccharomyces pombe (strain 972 / ATCC 24843) (Fission yeast).